A 230-amino-acid chain; its full sequence is Vacuole-localized protein 4 (230 aa).

The N-terminal stretch at 1-19 (MRVSSAIFTIASGIAAVSA) is a signal peptide.

It is found in the vacuole. Vacuolar protein required for aerial conidiation and conidial maturation. Also involved in blastospore production and cell cycle. Plays a vital role in the secretion of Pr1 proteases for cuticular penetration and hence contributes significantly to host infection and virulence. The protein is Vacuole-localized protein 4 of Beauveria bassiana (strain ARSEF 2860) (White muscardine disease fungus).